Consider the following 414-residue polypeptide: 5-aminolevulinate synthase (414 aa).

Residues R22, S133, and K152 each coordinate substrate. Pyridoxal 5'-phosphate-binding residues include S185, H213, and T241. K244 is an active-site residue. K244 is subject to N6-(pyridoxal phosphate)lysine. Pyridoxal 5'-phosphate is bound by residues T273 and T274. T359 lines the substrate pocket.

It belongs to the class-II pyridoxal-phosphate-dependent aminotransferase family. As to quaternary structure, homodimer. Pyridoxal 5'-phosphate is required as a cofactor.

It carries out the reaction succinyl-CoA + glycine + H(+) = 5-aminolevulinate + CO2 + CoA. The protein operates within porphyrin-containing compound metabolism; protoporphyrin-IX biosynthesis; 5-aminolevulinate from glycine: step 1/1. The protein is 5-aminolevulinate synthase (hemA) of Rickettsia felis (strain ATCC VR-1525 / URRWXCal2) (Rickettsia azadi).